A 390-amino-acid chain; its full sequence is MTILSPKDVVIVDGVRSAMGKTKNGMFRHVRADSMSAELVRALVERNDFDPRDVEDIIWGCVNQTLEQGLNIGRNIGLLAGIPKTAGGQTVNRLCGSSMQALHTAAAQIMTGQGDVFIIGGVEHMGHVGMMHGIDLNPEASKHYAKASNMMGLTAEMLGRMNNITREEQDAFGLESHRRAWAATTEGRFDNEIIGIEGHDAAGRLQLCTVDEVIRPDATMEQMQKLRPAFDPVSGTVTAATSSALSDGASAMLIMSAQKAKELGLKPRARIRSMAVAGCDAAIMGYGPVPATQKALKRAGMSIEDMQTIELNEAFAAQGLSVLKALNLTDKQDIVNINGGAIALGHPLGCSGARITVTLLNAMEQSDTEIGLATMCIGLGQGISTIIERV.

Cys95 functions as the Acyl-thioester intermediate in the catalytic mechanism. Catalysis depends on proton acceptor residues His346 and Cys376.

Belongs to the thiolase-like superfamily. Thiolase family. As to quaternary structure, heterotetramer of two alpha chains (FadB) and two beta chains (FadA).

It localises to the cytoplasm. The enzyme catalyses an acyl-CoA + acetyl-CoA = a 3-oxoacyl-CoA + CoA. Its pathway is lipid metabolism; fatty acid beta-oxidation. Its function is as follows. Catalyzes the final step of fatty acid oxidation in which acetyl-CoA is released and the CoA ester of a fatty acid two carbons shorter is formed. The sequence is that of 3-ketoacyl-CoA thiolase from Psychrobacter arcticus (strain DSM 17307 / VKM B-2377 / 273-4).